A 105-amino-acid chain; its full sequence is Large ribosomal subunit protein uL24 (105 aa).

It belongs to the universal ribosomal protein uL24 family. In terms of assembly, part of the 50S ribosomal subunit.

Functionally, one of two assembly initiator proteins, it binds directly to the 5'-end of the 23S rRNA, where it nucleates assembly of the 50S subunit. One of the proteins that surrounds the polypeptide exit tunnel on the outside of the subunit. The chain is Large ribosomal subunit protein uL24 from Azoarcus sp. (strain BH72).